Here is a 339-residue protein sequence, read N- to C-terminus: Phenylalanine--tRNA ligase alpha subunit (339 aa).

Position 262 (E262) interacts with Mg(2+).

The protein belongs to the class-II aminoacyl-tRNA synthetase family. Phe-tRNA synthetase alpha subunit type 1 subfamily. As to quaternary structure, tetramer of two alpha and two beta subunits. Mg(2+) serves as cofactor.

It is found in the cytoplasm. The catalysed reaction is tRNA(Phe) + L-phenylalanine + ATP = L-phenylalanyl-tRNA(Phe) + AMP + diphosphate + H(+). This is Phenylalanine--tRNA ligase alpha subunit from Neisseria gonorrhoeae (strain ATCC 700825 / FA 1090).